A 237-amino-acid chain; its full sequence is Phosphoserine phosphatase (237 aa).

Asp30 acts as the Nucleophile in catalysis. Mg(2+) is bound by residues Asp30 and Asp32. Residue Asp32 is the Proton donor of the active site. Substrate is bound by residues Glu39, Arg76, Ser120–Gly121, and Lys169. Residue Asp192 coordinates Mg(2+). Substrate is bound at residue Asn195.

This sequence belongs to the HAD-like hydrolase superfamily. SerB family. Requires Mg(2+) as cofactor.

It carries out the reaction O-phospho-L-serine + H2O = L-serine + phosphate. It catalyses the reaction O-phospho-D-serine + H2O = D-serine + phosphate. The protein operates within amino-acid biosynthesis; L-serine biosynthesis; L-serine from 3-phospho-D-glycerate: step 3/3. Functionally, catalyzes the dephosphorylation of phosphoserine (P-Ser) in vitro. Also catalyzes the dephosphorylation of phosphothreonine (P-Thr) in vitro. The protein is Phosphoserine phosphatase of Albidiferax ferrireducens (strain ATCC BAA-621 / DSM 15236 / T118) (Rhodoferax ferrireducens).